We begin with the raw amino-acid sequence, 551 residues long: mRNA cap guanine-N(7) methyltransferase (551 aa).

Positions 1–10 (MENRSSSGTP) are enriched in polar residues. Positions 1–152 (MENRSSSGTP…DRETLRRRQE (152 aa)) are disordered. Composition is skewed to basic and acidic residues over residues 48 to 76 (VTEE…EERH) and 141 to 152 (LVDRETLRRRQE). An mRNA cap 0 methyltransferase domain is found at 194–551 (SKIKGLRSFN…FYHAFCFYKV (358 aa)). 203–204 (NN) is an mRNA binding site. Residues Lys-207, Gly-250, Asp-274, Asp-312, 355-357 (MFA), and Tyr-360 contribute to the S-adenosyl-L-methionine site. Positions 407-430 (KAREEQEKKEKSDEAPEDGEVEED) are disordered. The span at 408–420 (AREEQEKKEKSDE) shows a compositional bias: basic and acidic residues. Acidic residues predominate over residues 421–430 (APEDGEVEED).

The protein belongs to the class I-like SAM-binding methyltransferase superfamily. mRNA cap 0 methyltransferase family.

The protein resides in the nucleus. The enzyme catalyses a 5'-end (5'-triphosphoguanosine)-ribonucleoside in mRNA + S-adenosyl-L-methionine = a 5'-end (N(7)-methyl 5'-triphosphoguanosine)-ribonucleoside in mRNA + S-adenosyl-L-homocysteine. Its function is as follows. Responsible for methylating the 5'-cap structure of mRNAs. This Aspergillus clavatus (strain ATCC 1007 / CBS 513.65 / DSM 816 / NCTC 3887 / NRRL 1 / QM 1276 / 107) protein is mRNA cap guanine-N(7) methyltransferase (abd1).